The primary structure comprises 69 residues: Large ribosomal subunit protein uL29 (69 aa).

It belongs to the universal ribosomal protein uL29 family.

The sequence is that of Large ribosomal subunit protein uL29 (rpmC) from Lactococcus lactis subsp. lactis (strain IL1403) (Streptococcus lactis).